Consider the following 186-residue polypeptide: uncharacterized protein (186 aa).

3 helical membrane passes run 43–63, 69–89, and 143–163; these read GAWV…HAIP, LAWT…FHWV, and WMFL…LPAV.

It is found in the endoplasmic reticulum membrane. This is an uncharacterized protein from Schizosaccharomyces pombe (strain 972 / ATCC 24843) (Fission yeast).